The sequence spans 393 residues: NAD(P)H-quinone oxidoreductase subunit H, chloroplastic (393 aa).

This sequence belongs to the complex I 49 kDa subunit family. As to quaternary structure, NDH is composed of at least 16 different subunits, 5 of which are encoded in the nucleus.

The protein localises to the plastid. Its subcellular location is the chloroplast thylakoid membrane. The catalysed reaction is a plastoquinone + NADH + (n+1) H(+)(in) = a plastoquinol + NAD(+) + n H(+)(out). The enzyme catalyses a plastoquinone + NADPH + (n+1) H(+)(in) = a plastoquinol + NADP(+) + n H(+)(out). In terms of biological role, NDH shuttles electrons from NAD(P)H:plastoquinone, via FMN and iron-sulfur (Fe-S) centers, to quinones in the photosynthetic chain and possibly in a chloroplast respiratory chain. The immediate electron acceptor for the enzyme in this species is believed to be plastoquinone. Couples the redox reaction to proton translocation, and thus conserves the redox energy in a proton gradient. The chain is NAD(P)H-quinone oxidoreductase subunit H, chloroplastic from Pelargonium hortorum (Common geranium).